Reading from the N-terminus, the 62-residue chain is Andropin (62 aa).

Positions 1 to 22 (MKYFSVLVVLTLILAIVDQSDA) are cleaved as a signal peptide.

It belongs to the andropin family. Ejaculatory duct of adult males.

It localises to the secreted. In terms of biological role, male-specific peptide with moderate activity against Gram-positive bacteria. This Drosophila teissieri (Fruit fly) protein is Andropin (Anp).